The sequence spans 182 residues: ATP-dependent protease subunit HslV (182 aa).

The active site involves T12. 3 residues coordinate Na(+): G167, C170, and T173.

This sequence belongs to the peptidase T1B family. HslV subfamily. In terms of assembly, a double ring-shaped homohexamer of HslV is capped on each side by a ring-shaped HslU homohexamer. The assembly of the HslU/HslV complex is dependent on binding of ATP.

The protein resides in the cytoplasm. It carries out the reaction ATP-dependent cleavage of peptide bonds with broad specificity.. With respect to regulation, allosterically activated by HslU binding. Protease subunit of a proteasome-like degradation complex believed to be a general protein degrading machinery. The polypeptide is ATP-dependent protease subunit HslV (Acidiphilium cryptum (strain JF-5)).